The following is a 1012-amino-acid chain: DNA polymerase catalytic subunit (1012 aa).

Positions 1–31 are disordered; that stretch reads MDFFNPFIDPTRGGPRNTVRQPTPSQSPTVP. Residues 21-31 are compositionally biased toward low complexity; sequence QPTPSQSPTVP.

It belongs to the DNA polymerase type-B family. As to quaternary structure, forms a complex with the ssDNA-binding protein, the DNA polymerase processivity factor, and the alkaline exonuclease. Interacts with the putative helicase-primase complex subunit; this interaction may coordinate leading and lagging strand DNA synthesis at the replication fork.

It is found in the host nucleus. The catalysed reaction is DNA(n) + a 2'-deoxyribonucleoside 5'-triphosphate = DNA(n+1) + diphosphate. It carries out the reaction Endonucleolytic cleavage to 5'-phosphomonoester.. Functionally, replicates viral genomic DNA. The replication complex is composed of six viral proteins: the DNA polymerase, processivity factor, primase, primase-associated factor, helicase, and ssDNA-binding protein. Additionally, the polymerase contains an intrinsic ribonuclease H (RNase H) activity that specifically degrades RNA/DNA heteroduplexes or duplex DNA substrates in the 5' to 3' direction. Therefore, it can catalyze the excision of the RNA primers that initiate the synthesis of Okazaki fragments at a replication fork during viral DNA replication. This is DNA polymerase catalytic subunit (ORF9) from Human herpesvirus 8 type P (isolate GK18) (HHV-8).